We begin with the raw amino-acid sequence, 187 residues long: Elongation factor P (187 aa).

This sequence belongs to the elongation factor P family.

The protein localises to the cytoplasm. The protein operates within protein biosynthesis; polypeptide chain elongation. In terms of biological role, involved in peptide bond synthesis. Stimulates efficient translation and peptide-bond synthesis on native or reconstituted 70S ribosomes in vitro. Probably functions indirectly by altering the affinity of the ribosome for aminoacyl-tRNA, thus increasing their reactivity as acceptors for peptidyl transferase. The polypeptide is Elongation factor P (Jannaschia sp. (strain CCS1)).